A 416-amino-acid chain; its full sequence is Lipid II:glycine glycyltransferase (416 aa).

This sequence belongs to the FemABX family.

It is found in the cytoplasm. It carries out the reaction beta-D-GlcNAc-(1-&gt;4)-Mur2Ac(oyl-L-Ala-D-isoglutaminyl-L-Lys-D-Ala-D-Ala)-di-trans,octa-cis-undecaprenyl diphosphate + glycyl-tRNA(Gly) = beta-D-GlcNAc-(1-&gt;4)-Mur2Ac(oyl-L-Ala-D-isoglutaminyl-L-Lys-(N(6)-Gly)-D-Ala-D-Ala)-di-trans,octa-cis-undecaprenyl diphosphate + tRNA(Gly) + H(+). Functionally, catalyzes the incorporation of amino acid(s) into the interchain peptide bridge of peptidoglycan, using aminoacyl-tRNA as amino acid donor. The chain is Lipid II:glycine glycyltransferase (femX) from Staphylococcus epidermidis (strain ATCC 35984 / DSM 28319 / BCRC 17069 / CCUG 31568 / BM 3577 / RP62A).